An 87-amino-acid polypeptide reads, in one-letter code: Large ribosomal subunit protein bL31B (87 aa).

The protein belongs to the bacterial ribosomal protein bL31 family. Type B subfamily. As to quaternary structure, part of the 50S ribosomal subunit.

This is Large ribosomal subunit protein bL31B from Shigella boydii serotype 4 (strain Sb227).